Here is a 633-residue protein sequence, read N- to C-terminus: Mitochondrial Rho GTPase 1 (633 aa).

Positions 1-170 (MATVRICVCG…FFLCQKAVTH (170 aa)) constitute a Miro 1 domain. Residues 1–603 (MATVRICVCG…PRSEEDVEGK (603 aa)) lie on the Cytoplasmic side of the membrane. GTP contacts are provided by residues 10-17 (GDEGTGKS), 59-63 (DTSAL), and 115-118 (NKSD). EF-hand domains are found at residues 186–221 (AAVAALQRIFYLSDKDRDGYLSDKELEDFQMRCFEK) and 306–341 (EGYRFFVNLFLLSDKDNDGGLNDAELASLFAPTPGL). 9 residues coordinate Ca(2+): Asp199, Asp201, Asp203, Tyr205, Glu210, Asp319, Asp321, Asp323, and Glu330. Positions 398–418 (NPSTTAALKVTRPRKRRKRPG) are disordered. Over residues 408–418 (TRPRKRRKRPG) the composition is skewed to basic residues. Positions 422 to 588 (RNVVLGHVLG…FVHIAEAAME (167 aa)) constitute a Miro 2 domain. GTP-binding positions include 431 to 438 (GPPGSGKS), 467 to 471 (ELPGG), and 537 to 540 (LKAD). The helical; Anchor for type IV membrane protein transmembrane segment at 604 to 624 (WMAWGIALGAVVCAGAAAVMI) threads the bilayer. Topologically, residues 625 to 633 (WRRVSGSGT) are mitochondrial intermembrane.

It belongs to the mitochondrial Rho GTPase family.

It is found in the mitochondrion outer membrane. Mitochondrial GTPase involved in mitochondrial trafficking. Probably involved in control of anterograde transport of mitochondria and their subcellular distribution. This is Mitochondrial Rho GTPase 1 (gem1) from Aspergillus oryzae (strain ATCC 42149 / RIB 40) (Yellow koji mold).